Here is a 118-residue protein sequence, read N- to C-terminus: Large ribosomal subunit protein bL20 (118 aa).

This sequence belongs to the bacterial ribosomal protein bL20 family.

In terms of biological role, binds directly to 23S ribosomal RNA and is necessary for the in vitro assembly process of the 50S ribosomal subunit. It is not involved in the protein synthesizing functions of that subunit. This Francisella philomiragia subsp. philomiragia (strain ATCC 25017 / CCUG 19701 / FSC 153 / O#319-036) protein is Large ribosomal subunit protein bL20.